A 2804-amino-acid polypeptide reads, in one-letter code: MNGDMPHVPITTLAGIASLTDLLNQLPLPSPLPATTTKSLLFNARIAEEVNCLLACRDDNLVSQLVHSLNQVSTDHIELKDNLGSDDPEGDIPVLLQAVLARSPNVFREKSMQNRYVQSGMMMSQYKLSQNSMHSSPASSNYQQTTISHSPSSRFVPPQTSSGNRFMPQQNSPVPSPYAPQSPAGYMPYSHPSSYTTHPQMQQASVSSPIVAGGLRNIHDNKVSGPLSGNSANHHADNPRHGSSEDYLHMVHRLSSDDGDSSTMRNAASFPLRSPQPVCSPAGSEGTPKGSRPPLILQSQSLPCSSPRDVPPDILLDSPERKQKKQKKMKLGKDEKEQSEKAAMYDIISSPSKDSTKLTLRLSRVRSSDMDQQEDMISGVENSNVSENDIPFNVQYPGQTSKTPITPQDINRPLNAAQCLSQQEQTAFLPANQVPVLQQNTSVAAKQPQTSVVQNQQQISQQGPIYDEVELDALAEIERIERESAIERERFSKEVQDKDKPLKKRKQDSYPQEAGGATGGNRPASQETGSTGNGSRPALMVSIDLHQAGRVDSQASITQDSDSIKKPEEIKQCNDAPVSVLQEDIVGSLKSTPENHPETPKKKSDPELSKSEMKQSESRLAESKPNENRLVETKSSENKLETKVETQTEELKQNESRTTECKQNESTIVEPKQNENRLSDTKPNDNKQNNGRSETTKSRPETPKQKGESRPETPKQKSDGHPETPKQKGDGRPETPKQKGESRPETPKQKNEGRPETPKHRHDNRRDSGKPSTEKKPEVSKHKQDTKSDSPRLKSERAEALKQRPDGRSVSESLRRDHDNKQKSDDRGESERHRGDQSRVRRPETLRSSSRNEHGIKSDSSKTDKLERKHRHESGDSRERPSSGEQKSRPDSPRVKQGDSNKSRSDKLGFKSPTSKDDKRTEGNKSKVDTNKAHPDNKAEFPSYLLGGRSGALKNFVIPKIKRDKDGNVTQETKKMEMKGEPKDKVEKIGLVEDLNKGAKPVVVLQKLSLDDVQKLIKDREDKSRSSLKPIKNKPSKSNKGSIDQSVLKELPPELLAEIESTMPLCERVKMNKRKRSTVNEKPKYAEISSDEDNDSDEAFESSRKRHKKDDDKAWEYEERDRRSSGDHRRSGHSHEGRRSSGGGRYRNRSPSDSDMEDYSPPPSLSEVARKMKKKEKQKKRKAYEPKLTPEEMMDSSTFKRFTASIENILDNLEDMDFTAFGDDDEIPQELLLGKHQLNELGSESAKIKAMGIMDKLSTDKTVKVLNILEKNIQDGSKLSTLLNHNNDTEEEERLWRDLIMERVTKSADACLTTINIMTSPNMPKAVYIEDVIERVIQYTKFHLQNTLYPQYDPVYRLDPHGGGLLSSKAKRAKCSTHKQRVIVMLYNKVCDIVSSLSELLEIQLLTDTTILQVSSMGITPFFVENVSELQLCAIKLVTAVFSRYEKHRQLILEEIFTSLARLPTSKRSLRNFRLNSSDMDGEPMYIQMVTALVLQLIQCVVHLPSSEKDSNAEEDSNKKIDQDVVITNSYETAMRTAQNFLSIFLKKCGSKQGEEDYRPLFENFVQDLLSTVNKPEWPAAELLLSLLGRLLVHQFSNKSTEMALRVASLDYLGTVAARLRKDAVTSKMDQGSIERILKQVSGGEDEIQQLQKALLDYLDENTETDPSLVFSRKFYIAQWFRDTTLETEKAMKSQKDEESSEGTHHAKEIETTGQIMHRAENRKKFLRSIIKTTPSQFSTLKMNSDTVDYDDACLIVRYLASMRPFAQSFDIYLTQILRVLGENAIAVRTKAMKCLSEVVAVDPSILARLDMQRGVHGRLMDNSTSVREAAVELLGRFVLCRPQLAEQYYDMLIERILDTGISVRKRVIKILRDICIEQPTFPKITEMCVKMIRRVNDEEGIKKLVNETFQKLWFTPTPHNDKEAMTRKILNITDVVAACRDTGYDWFEQLLQNLLKSEEDSSYKPVKKACTQLVDNLVEHILKYEESLADSDNKGVNSGRLVACITTLFLFSKIRPQLMVKHAMTMQPYLTTKCSTQNDFMVICNVAKILELVVPLMEHPSETFLATIEEDLMKLIIKYGMTVVQHCVSCLGAVVNKVTQNFKFVWACFNRYYGAISKLKSQHQEDPNNTSLLTNKPALLRSLFTVGALCRHFDFDLEDFKGNSKVNIKDKVLELLMYFTKHSDEEVQTKAIIGLGFAFIQHPSLMFEQEVKNLYNNILSDKNSSVNLKIQVLKNLQTYLQEEDTRMQQADRDWKKVAKQEDLKEMGDVSSGMSSSIMQLYLKQVLEAFFHTQSSVRHFALNVIALTLNQGLIHPVQCVPYLIAMGTDPEPAMRNKADQQLVEIDKKYAGFIHMKAVAGMKMSYQVQQAINTCLKDPVRGFRQDESSSALCSHLYSMIRGNRQHRRAFLISLLNLFDDTAKTDVTMLLYIADNLACFPYQTQEEPLFIMHHIDITLSVSGSNLLQSFKESMVKDKRKERKSSPSKENESSDSEEEVSRPRKSRKRVDSDSDSDSEDDINSVMKCLPENSAPLIEFANVSQGILLLLMLKQHLKNLCGFSDSKIQKYSPSESAKVYDKAINRKTGVHFHPKQTLDFLRSDMANSKITEEVKRSIVKQYLDFKLLMEHLDPDEEEEEGEVSASTNARNKAITSLLGGGSPKNNTAAETEDDESDGEDRGGGTSGSLRRSKRNSDSTELAAQMNESVDVMDVIAICCPKYKDRPQIARVVQKTSSGFSVQWMAGSYSGSWTEAKRRDGRKLVPWVDTIKESDIIYKKIALTSANKLTNKVVQTLRSLYAAKDGTSS.

Polar residues-rich tracts occupy residues 128–173 and 191–208; these read LSQN…QNSP and HPSS…SVSS. Positions 128-340 are disordered; that stretch reads LSQNSMHSSP…LGKDEKEQSE (213 aa). Serine 150 and serine 162 each carry phosphoserine. The span at 234–249 shows a compositional bias: basic and acidic residues; it reads HHADNPRHGSSEDYLH. Serine 243, serine 256, serine 274, serine 280, serine 284, serine 301, serine 306, and serine 318 each carry phosphoserine. The segment covering 331–340 has biased composition (basic and acidic residues); sequence LGKDEKEQSE. A Phosphoserine modification is found at serine 350. A compositionally biased stretch (basic and acidic residues) spans 482-500; sequence RESAIERERFSKEVQDKDK. The tract at residues 482–946 is disordered; sequence RESAIERERF…NKAEFPSYLL (465 aa). Over residues 523 to 534 the composition is skewed to polar residues; that stretch reads PASQETGSTGNG. Basic and acidic residues-rich tracts occupy residues 562 to 572, 593 to 663, 672 to 685, and 694 to 939; these read DSIKKPEEIKQ, PENH…ECKQ, KQNE…KPND, and ETTK…DNKA. Threonine 713 and threonine 746 each carry phosphothreonine. Serine 912 carries the phosphoserine modification. Positions 996-1009 match the PxVxL motif motif; it reads NKGAKPVVVLQKLS. Disordered regions lie at residues 1017 to 1047 and 1060 to 1191; these read IKDR…DQSV and ESTM…LTPE. An N6-acetyllysine modification is found at lysine 1082. 3 positions are modified to phosphoserine: serine 1089, serine 1090, and serine 1096. The span at 1089 to 1100 shows a compositional bias: acidic residues; the sequence is SSDEDNDSDEAF. A compositionally biased stretch (basic and acidic residues) spans 1109–1139; sequence KDDDKAWEYEERDRRSSGDHRRSGHSHEGRR. A phosphoserine mark is found at serine 1150, serine 1152, and serine 1154. At tyrosine 1159 the chain carries Phosphotyrosine. Phosphoserine is present on serine 1160. Residues 1171–1182 are compositionally biased toward basic residues; that stretch reads KMKKKEKQKKRK. Threonine 1189 carries the post-translational modification Phosphothreonine. Residue serine 1197 is modified to Phosphoserine. The interval 1691-1710 is disordered; sequence AMKSQKDEESSEGTHHAKEI. HEAT repeat units lie at residues 1767 to 1805, 1843 to 1881, 1945 to 1984, 2227 to 2267, and 2313 to 2351; these read AQSF…VDPS, PQLA…EQPT, YDWF…HILK, VNLK…LKEM, and LIHP…KYAG. Residues 2473 to 2489 are compositionally biased toward basic and acidic residues; that stretch reads VKDKRKERKSSPSKENE. 2 disordered regions span residues 2473 to 2520 and 2651 to 2696; these read VKDK…DDIN and TSLL…DSTE. Serine 2493, serine 2509, serine 2511, serine 2513, serine 2515, serine 2652, and serine 2658 each carry phosphoserine. Residues 2510–2519 are compositionally biased toward acidic residues; sequence DSDSDSEDDI. Threonine 2667 bears the Phosphothreonine mark. Serine 2672 bears the Phosphoserine mark.

It belongs to the SCC2/Nipped-B family. Heterodimerizes with MAU2/SCC4 to form the cohesin loading complex. The NIPBL-MAU2 heterodimer interacts with the cohesin complex composed of SMC1A/B and SMC3 heterodimer, RAD21 and STAG1/SA1. NIPBL directly contacts all members of the complex, RAD21, SMC1A/B, SMC3 and STAG1. Interacts directly (via PxVxL motif) with CBX5. Interacts with ZNF609 (via N-terminus). Interacts with the multiprotein complex Integrator. Interacts (via PxVxL motif) with CBX3. Interacts with BRD4. In terms of tissue distribution, widely expressed. Highly expressed in heart, skeletal muscle, fetal and adult liver, fetal and adult kidney. Expressed at intermediates level in thymus, placenta, peripheral leukocyte and small intestine. Weakly or not expressed in brain, colon, spleen and lung.

The protein resides in the nucleus. The protein localises to the chromosome. Functionally, plays an important role in the loading of the cohesin complex on to DNA. Forms a heterodimeric complex (also known as cohesin loading complex) with MAU2/SCC4 which mediates the loading of the cohesin complex onto chromatin. Plays a role in cohesin loading at sites of DNA damage. Its recruitment to double-strand breaks (DSBs) sites occurs in a CBX3-, RNF8- and RNF168-dependent manner whereas its recruitment to UV irradiation-induced DNA damage sites occurs in a ATM-, ATR-, RNF8- and RNF168-dependent manner. Along with ZNF609, promotes cortical neuron migration during brain development by regulating the transcription of crucial genes in this process. Preferentially binds promoters containing paused RNA polymerase II. Up-regulates the expression of SEMA3A, NRP1, PLXND1 and GABBR2 genes, among others. This chain is Nipped-B-like protein (NIPBL), found in Homo sapiens (Human).